The sequence spans 241 residues: Carboxy-S-adenosyl-L-methionine synthase (241 aa).

Residues tyrosine 38, 63–65, 88–89, 116–117, asparagine 131, and arginine 198 each bind S-adenosyl-L-methionine; these read GCS, DN, and DI.

Belongs to the class I-like SAM-binding methyltransferase superfamily. Cx-SAM synthase family. Homodimer.

The catalysed reaction is prephenate + S-adenosyl-L-methionine = carboxy-S-adenosyl-L-methionine + 3-phenylpyruvate + H2O. Functionally, catalyzes the conversion of S-adenosyl-L-methionine (SAM) to carboxy-S-adenosyl-L-methionine (Cx-SAM). The protein is Carboxy-S-adenosyl-L-methionine synthase of Histophilus somni (strain 129Pt) (Haemophilus somnus).